Here is a 429-residue protein sequence, read N- to C-terminus: tRNA-2-methylthio-N(6)-dimethylallyladenosine synthase (429 aa).

The 110-residue stretch at 1–110 (MKFFIKTYGC…IPEAVELSIK (110 aa)) folds into the MTTase N-terminal domain. 6 residues coordinate [4Fe-4S] cluster: C10, C46, C75, C146, C150, and C153. Residues 132-364 (RNSKHHAWIT…NLQKEINKML (233 aa)) form the Radical SAM core domain. Positions 366 to 427 (ESYLDKTVEV…AGPLYGDIIK (62 aa)) constitute a TRAM domain.

It belongs to the methylthiotransferase family. MiaB subfamily. In terms of assembly, monomer. [4Fe-4S] cluster serves as cofactor.

It is found in the cytoplasm. It catalyses the reaction N(6)-dimethylallyladenosine(37) in tRNA + (sulfur carrier)-SH + AH2 + 2 S-adenosyl-L-methionine = 2-methylsulfanyl-N(6)-dimethylallyladenosine(37) in tRNA + (sulfur carrier)-H + 5'-deoxyadenosine + L-methionine + A + S-adenosyl-L-homocysteine + 2 H(+). Its function is as follows. Catalyzes the methylthiolation of N6-(dimethylallyl)adenosine (i(6)A), leading to the formation of 2-methylthio-N6-(dimethylallyl)adenosine (ms(2)i(6)A) at position 37 in tRNAs that read codons beginning with uridine. The polypeptide is tRNA-2-methylthio-N(6)-dimethylallyladenosine synthase (Thermosipho africanus (strain TCF52B)).